We begin with the raw amino-acid sequence, 267 residues long: Translation initiation factor 2 subunit alpha (267 aa).

An S1 motif domain is found at Gly12–Lys83.

It belongs to the eIF-2-alpha family. As to quaternary structure, heterotrimer composed of an alpha, a beta and a gamma chain.

In terms of biological role, eIF-2 functions in the early steps of protein synthesis by forming a ternary complex with GTP and initiator tRNA. This chain is Translation initiation factor 2 subunit alpha, found in Hyperthermus butylicus (strain DSM 5456 / JCM 9403 / PLM1-5).